A 303-amino-acid chain; its full sequence is tRNA pseudouridine synthase B (303 aa).

Asp53 (nucleophile) is an active-site residue.

The protein belongs to the pseudouridine synthase TruB family. Type 1 subfamily.

The catalysed reaction is uridine(55) in tRNA = pseudouridine(55) in tRNA. Its function is as follows. Responsible for synthesis of pseudouridine from uracil-55 in the psi GC loop of transfer RNAs. The chain is tRNA pseudouridine synthase B from Zymomonas mobilis subsp. mobilis (strain ATCC 31821 / ZM4 / CP4).